The sequence spans 264 residues: Small ribosomal subunit protein eS1A (264 aa).

A disordered region spans residues 233 to 264; the sequence is GEGGGTGKPAGDETGAKVERADGYEPPVQESV. Positions 242–255 are enriched in basic and acidic residues; it reads AGDETGAKVERADG.

It belongs to the eukaryotic ribosomal protein eS1 family. Component of the small ribosomal subunit. Mature ribosomes consist of a small (40S) and a large (60S) subunit. The 40S subunit contains about 33 different proteins and 1 molecule of RNA (18S). The 60S subunit contains about 49 different proteins and 3 molecules of RNA (28S, 5.8S and 5S). Part of the small subunit (SSU) processome, composed of more than 70 proteins and the RNA chaperone small nucleolar RNA (snoRNA) U3.

The protein resides in the cytoplasm. The protein localises to the nucleus. It is found in the nucleolus. Functionally, component of the small ribosomal subunit. The ribosome is a large ribonucleoprotein complex responsible for the synthesis of proteins in the cell. Part of the small subunit (SSU) processome, first precursor of the small eukaryotic ribosomal subunit. During the assembly of the SSU processome in the nucleolus, many ribosome biogenesis factors, an RNA chaperone and ribosomal proteins associate with the nascent pre-rRNA and work in concert to generate RNA folding, modifications, rearrangements and cleavage as well as targeted degradation of pre-ribosomal RNA by the RNA exosome. May play a role during erythropoiesis. The polypeptide is Small ribosomal subunit protein eS1A (rps3a-a) (Xenopus laevis (African clawed frog)).